Consider the following 145-residue polypeptide: uncharacterized protein (145 aa).

A signal peptide spans 1-22 (MLTRLVLSAHLSSTTSPPWTHA). Residue Asn98 is glycosylated (N-linked (GlcNAc...) asparagine). Positions 103–145 (SSGQQRQAARQEEENSICKAHDSREGRLGYPLSAHQPGSGGPN) are disordered.

The protein localises to the secreted. This is an uncharacterized protein from Homo sapiens (Human).